The chain runs to 1241 residues: Anion exchange protein 2 (1241 aa).

Positions Met1 to Arg240 are disordered. At Met1 to Gln707 the chain is on the cytoplasmic side. 2 stretches are compositionally biased toward basic and acidic residues: residues Glu37 to Glu49 and Gly58 to Arg75. 2 stretches are compositionally biased toward basic residues: residues Gln76–Leu85 and Arg94–Pro110. Residues Ser113, Ser132, Ser144, Ser170, Ser172, and Ser173 each carry the phosphoserine modification. The span at Thr120–Glu133 shows a compositional bias: acidic residues. The segment covering Thr141 to Phe155 has biased composition (low complexity). Thr183 bears the Phosphothreonine mark. Over residues Gly189–Gly209 the composition is skewed to low complexity. The span at Thr210–Ser219 shows a compositional bias: gly residues. Ser243 is subject to Phosphoserine. Thr257 carries the post-translational modification Phosphothreonine. Lys274 is subject to N6-methyllysine. The disordered stretch occupies residues Leu288 to Pro320. Ser443 is subject to Phosphoserine. Residues Ser449–Gly471 form a disordered region. A run of 4 helical transmembrane segments spans residues Cys708–Gly731, Leu737–Phe774, Ser784–Val816, and Ile826–Phe847. The membrane (anion exchange) stretch occupies residues Cys708–Val1241. At Gln848–Thr900 the chain is on the extracellular side. 3 N-linked (GlcNAc...) asparagine glycosylation sites follow: Asn859, Asn868, and Asn882. A helical transmembrane segment spans residues Ala901–Leu918. At Arg919–Arg933 the chain is on the cytoplasmic side. Helical transmembrane passes span Val934–Ile954, Pro988–Met1010, Leu1036–Val1059, Val1091–Tyr1136, and Met1163–Leu1199. Cys1173 is lipidated: S-palmitoyl cysteine.

It belongs to the anion exchanger (TC 2.A.31) family. In terms of tissue distribution, expressed in the liver, stomach, kidney, prostate, thyroid and rectum. Expressed in the liver and kidney.

It is found in the apical cell membrane. The protein localises to the basolateral cell membrane. It catalyses the reaction hydrogencarbonate(in) + chloride(out) = hydrogencarbonate(out) + chloride(in). In terms of biological role, sodium-independent anion exchanger which mediates the electroneutral exchange of chloride for bicarbonate ions across the cell membrane. Plays an important role in osteoclast differentiation and function. Regulates bone resorption and calpain-dependent actin cytoskeleton organization in osteoclasts via anion exchange-dependent control of pH. Essential for intracellular pH regulation in CD8(+) T-cells upon CD3 stimulation, modulating CD8(+) T-cell responses. In Homo sapiens (Human), this protein is Anion exchange protein 2 (SLC4A2).